The chain runs to 374 residues: SH2 domain-containing protein 2A (374 aa).

Residues 116 to 207 form the SH2 domain; sequence WFHGFITRRE…PYGEILTQPL (92 aa). The interval 213-232 is disordered; the sequence is EPAGLSLRADSDSGSKRQDP. The span at 221–232 shows a compositional bias: basic and acidic residues; the sequence is ADSDSGSKRQDP. A Phosphoserine modification is found at Ser237. The disordered stretch occupies residues 241 to 301; sequence QQGQAQASGH…QAPPINPIYQ (61 aa). Over residues 256–266 the composition is skewed to polar residues; sequence ASQQKATSQAS. Residues 267-273 carry the SH3-binding motif; it reads RPRPPIP. The segment covering 268–279 has biased composition (pro residues); that stretch reads PRPPIPAKPQLP. At Ser316 the chain carries Phosphoserine. Disordered stretches follow at residues 321 to 340 and 353 to 374; these read PSNI…IGHP and GQVR…GSPS.

Interacts with KDR. Interacts with p56-LCK, TXK and ITK. Post-translationally, phosphorylated on tyrosine residues upon TCR-stimulation. As to expression, expression limited to tissues of the immune system and, in particular, activated T-cells and natural killer cells. Expressed in the thymus, lymph node, and to a lesser extent, in the spleen and bone marrow. According to PubMed:10553045, also expressed in the lung.

It localises to the cytoplasm. The protein resides in the cell membrane. Its function is as follows. Could be a T-cell-specific adapter protein involved in the control of T-cell activation. May play a role in p56-LCK-mediated T-cell signaling. Could be involved in the regulation of responses to T-cell activation stimuli, specifically proliferation and lymphokine production. Interactions with ITK and TXK may provide important biochemical links of these two important kinases with other components in the T-cell activation machinery. The protein is SH2 domain-containing protein 2A (Sh2d2a) of Mus musculus (Mouse).